We begin with the raw amino-acid sequence, 302 residues long: Alpha-ketoglutarate-dependent dioxygenase alkB homolog 4 (302 aa).

An N-acetylalanine modification is found at A2. T8 is modified (phosphothreonine). A Fe2OG dioxygenase domain is found at 150–274; the sequence is PVEQCNLDYC…RVCVTFRELS (125 aa). Fe cation-binding residues include H169, D171, and H254. R265 lines the 2-oxoglutarate pocket.

This sequence belongs to the alkB family. As to quaternary structure, interacts with ZFHX3, MLLT3, MLLT1, HSF4, EP300, TES, EIF3C, MTMR6 and PSMA6. It depends on Fe(2+) as a cofactor. Widely expressed, with highest expression in pancreas, ovary and spleen.

The protein localises to the cytoplasm. It is found in the nucleus. Its subcellular location is the nucleolus. The protein resides in the midbody. The enzyme catalyses an N(6)-methyl-2'-deoxyadenosine in DNA + 2-oxoglutarate + O2 = a 2'-deoxyadenosine in DNA + formaldehyde + succinate + CO2. It catalyses the reaction N(6)-methyl-L-lysyl-[protein] + 2-oxoglutarate + O2 = L-lysyl-[protein] + formaldehyde + succinate + CO2. Functionally, dioxygenase that mediates demethylation of actin monomethylated at 'Lys-84' (K84me1), thereby acting as a regulator of actomyosin-processes. Demethylation of actin K84me1 is required for maintaining actomyosin dynamics supporting normal cleavage furrow ingression during cytokinesis and cell migration. In addition to proteins, also demethylates DNA: specifically demethylates DNA methylated on the 6th position of adenine (N(6)-methyladenosine) DNA, thereby regulating Polycomb silencing. The protein is Alpha-ketoglutarate-dependent dioxygenase alkB homolog 4 of Homo sapiens (Human).